The following is a 236-amino-acid chain: uncharacterized protein (236 aa).

Positions 1–29 are disordered; that stretch reads MNNEKNKQDRENLNRQDERKSSEIKSERK.

This is an uncharacterized protein from Staphylococcus aureus.